Here is a 330-residue protein sequence, read N- to C-terminus: DNA-directed RNA polymerase subunit alpha (330 aa).

The segment at 1-232 (MAILAFQKPD…YHFMLFSDEK (232 aa)) is alpha N-terminal domain (alpha-NTD). Positions 248 to 330 (EEVLHMRQLL…DISKYKLDKE (83 aa)) are alpha C-terminal domain (alpha-CTD).

This sequence belongs to the RNA polymerase alpha chain family. As to quaternary structure, homodimer. The RNAP catalytic core consists of 2 alpha, 1 beta, 1 beta' and 1 omega subunit. When a sigma factor is associated with the core the holoenzyme is formed, which can initiate transcription.

The enzyme catalyses RNA(n) + a ribonucleoside 5'-triphosphate = RNA(n+1) + diphosphate. Its function is as follows. DNA-dependent RNA polymerase catalyzes the transcription of DNA into RNA using the four ribonucleoside triphosphates as substrates. This Bacteroides fragilis (strain ATCC 25285 / DSM 2151 / CCUG 4856 / JCM 11019 / LMG 10263 / NCTC 9343 / Onslow / VPI 2553 / EN-2) protein is DNA-directed RNA polymerase subunit alpha.